The primary structure comprises 275 residues: Phosphatidylglycerol--prolipoprotein diacylglyceryl transferase (275 aa).

7 helical membrane-spanning segments follow: residues 22-42 (LSVR…MWLA), 61-81 (LLFY…VLFY), 96-116 (IWTG…AMIW), 125-145 (FFTV…VGRI), 177-197 (SQLY…NLFW), 204-224 (GAIS…VEFV), and 238-258 (ISMG…MVWA). Arg144 is an a 1,2-diacyl-sn-glycero-3-phospho-(1'-sn-glycerol) binding site.

Belongs to the Lgt family.

The protein resides in the cell inner membrane. The catalysed reaction is L-cysteinyl-[prolipoprotein] + a 1,2-diacyl-sn-glycero-3-phospho-(1'-sn-glycerol) = an S-1,2-diacyl-sn-glyceryl-L-cysteinyl-[prolipoprotein] + sn-glycerol 1-phosphate + H(+). It functions in the pathway protein modification; lipoprotein biosynthesis (diacylglyceryl transfer). Catalyzes the transfer of the diacylglyceryl group from phosphatidylglycerol to the sulfhydryl group of the N-terminal cysteine of a prolipoprotein, the first step in the formation of mature lipoproteins. In Aeromonas salmonicida (strain A449), this protein is Phosphatidylglycerol--prolipoprotein diacylglyceryl transferase.